The sequence spans 269 residues: Phosphonoacetaldehyde hydrolase (269 aa).

D10 serves as the catalytic Nucleophile. Positions 10 and 12 each coordinate Mg(2+). The Schiff-base intermediate with substrate role is filled by K52. D186 lines the Mg(2+) pocket.

It belongs to the HAD-like hydrolase superfamily. PhnX family. As to quaternary structure, homodimer. Requires Mg(2+) as cofactor.

The catalysed reaction is phosphonoacetaldehyde + H2O = acetaldehyde + phosphate + H(+). Involved in phosphonate degradation. The sequence is that of Phosphonoacetaldehyde hydrolase from Salmonella agona (strain SL483).